Consider the following 196-residue polypeptide: Heat shock protein beta-8 (196 aa).

Phosphoserine occurs at positions 24 and 57. Thr63 carries the post-translational modification Phosphothreonine; by PKC; in vitro. Arg71 and Arg78 each carry asymmetric dimethylarginine. One can recognise a sHSP domain in the interval 74–185 (TATARFGVPA…TFGESSFNNE (112 aa)). Positions 176-196 (TFGESSFNNELPQDSQEVTCT) are disordered. The segment covering 177–196 (FGESSFNNELPQDSQEVTCT) has biased composition (polar residues).

It belongs to the small heat shock protein (HSP20) family. Monomer. Forms a ternary complex with BAG3 and HSPA1A. Component of the chaperone-assisted selective autophagy (CASA) complex consisting of BAG3, HSPA8/HSC70, HSPB8 and STUB1/CHIP. Interacts with HSPB1. Interacts with DNAJB6. Interacts with BAG3. As to expression, predominantly expressed in skeletal muscle and heart.

The protein resides in the cytoplasm. It localises to the nucleus. Functionally, involved in the chaperone-assisted selective autophagy (CASA), a crucial process for protein quality control, particularly in mechanical strained cells and tissues such as muscle. Displays temperature-dependent chaperone activity. This chain is Heat shock protein beta-8 (HSPB8), found in Homo sapiens (Human).